Consider the following 204-residue polypeptide: Probable peptidyl-tRNA hydrolase (204 aa).

The active-site Proton acceptor is histidine 36. Asparagine 86 and asparagine 132 together coordinate tRNA.

This sequence belongs to the PTH family.

It carries out the reaction an N-acyl-L-alpha-aminoacyl-tRNA + H2O = an N-acyl-L-amino acid + a tRNA + H(+). Functionally, peptidyl-tRNA hydrolase that cleaves nascent chains-tRNAs that are not stably fixed in the P-site of 60S ribosome-nascent chain complexes. Acts downstream of the ribosome-associated quality control (RQC) pathway to release non-ubiquitinated nascent chains from 60S and 80S ribosome-nascent chain complexes. Does not act on ubiquitinated nascent chains, which are cleaved by ANKZF1 for degradation. The protein is Probable peptidyl-tRNA hydrolase of Mus musculus (Mouse).